Reading from the N-terminus, the 1806-residue chain is Atrochrysone carboxylic acid synthase (1806 aa).

Positions 30 to 283 (DLQGLFRRLY…SLPVYSGLCH (254 aa)) are N-terminal acylcarrier protein transacylase domain (SAT). The region spanning 416 to 850 (QSKIAIIGMS…GGNTTVCLEE (435 aa)) is the Ketosynthase family 3 (KS3) domain. Catalysis depends on for beta-ketoacyl synthase activity residues C589, H725, and H768. The segment at 951–1270 (FAFTGQGASY…SLTALHCAGV (320 aa)) is malonyl-CoA:ACP transacylase (MAT) domain. A product template (PT) domain region spans residues 1340–1659 (TSTVQQIIEE…RILLNRFFTA (320 aa)). The N-terminal hotdog fold stretch occupies residues 1344 to 1479 (QQIIEESFNG…ASILYDDAAL (136 aa)). A PKS/mFAS DH domain is found at 1344–1654 (QQIIEESFNG…FRRYPRILLN (311 aa)). Catalysis depends on H1376, which acts as the Proton acceptor; for dehydratase activity. Positions 1506 to 1654 (IANRFTRNMA…FRRYPRILLN (149 aa)) are C-terminal hotdog fold. D1565 acts as the Proton donor; for dehydratase activity in catalysis. Positions 1668-1726 (HAAASSTPAPRTKPEPVPVATPATAAAPVAQSPAAPASVTPAPAPAPAPGPTPAAAPAA) are disordered. A compositionally biased stretch (low complexity) spans 1685-1708 (PVATPATAAAPVAQSPAAPASVTP). Over residues 1709 to 1721 (APAPAPAPGPTPA) the composition is skewed to pro residues. One can recognise a Carrier domain in the interval 1728–1805 (GESDSVAAKA…DLRSWLLEYY (78 aa)). O-(pantetheine 4'-phosphoryl)serine is present on S1765.

The enzyme catalyses holo-[ACP] + 8 malonyl-CoA + 8 H(+) = atrochrysone carboxyl-[ACP] + 8 CO2 + 8 CoA + 2 H2O. The protein operates within secondary metabolite biosynthesis. Its function is as follows. Atrochrysone carboxylic acid synthase; part of the gene cluster that mediates the biosynthesis of monodictyphenone, a prenyl xanthone derivative. The pathway begins with the synthesis of atrochrysone thioester by the polyketide synthase (PKS) mdpG. The atrochrysone carboxyl ACP thioesterase mdpF then breaks the thioester bond and releases the atrochrysone carboxylic acid from mdpG. The atrochrysone carboxylic acid is then converted to atrochrysone which is further transformed into emodin anthrone. The next step is performed by the anthrone oxygenase mdpH that catalyzes the oxidation of emodinanthrone to emodin. Emodin is further modified to yield monodictyphenone via several steps involving mdpB, mdpC mdpJ, mdpK and mdpL. The short chain dehydrogenase mdpC converts the tautomers of emodin hydroquinone into the 3-hydroxy-3,4-dihydroan-thracen-1(2H)-one derivative. These enzymes with xptA, xptB and xptC are also proposed to be involved in the synthesis of shamixanthone from emodin. Especially, direct reduction of emodin by the short chain dehydrogenase mdpC followed by dehydration catalyzed by the scytalone dehydratase-like protein mdpB gives loss of oxygen and formation of chrysophanol intermediate in two simple steps. The sequence is that of Atrochrysone carboxylic acid synthase from Emericella nidulans (strain FGSC A4 / ATCC 38163 / CBS 112.46 / NRRL 194 / M139) (Aspergillus nidulans).